Consider the following 289-residue polypeptide: Pantothenate synthetase (289 aa).

An ATP-binding site is contributed by Met33–His40. His40 (proton donor) is an active-site residue. Gln70 is a binding site for (R)-pantoate. Gln70 contributes to the beta-alanine binding site. ATP is bound at residue Gly157 to Asp160. A (R)-pantoate-binding site is contributed by Gln163. ATP contacts are provided by residues Val186 and Leu194 to Arg197.

Belongs to the pantothenate synthetase family. In terms of assembly, homodimer.

Its subcellular location is the cytoplasm. The catalysed reaction is (R)-pantoate + beta-alanine + ATP = (R)-pantothenate + AMP + diphosphate + H(+). Its pathway is cofactor biosynthesis; (R)-pantothenate biosynthesis; (R)-pantothenate from (R)-pantoate and beta-alanine: step 1/1. Functionally, catalyzes the condensation of pantoate with beta-alanine in an ATP-dependent reaction via a pantoyl-adenylate intermediate. This chain is Pantothenate synthetase, found in Anaeromyxobacter dehalogenans (strain 2CP-C).